The following is a 372-amino-acid chain: MFEFEIKSNCSNTEARTGIFHTPNGQVNTPRFMPVGTLATVKGISSEQLISTGSEMILSNTFHLHLQPGEKLVKESGGIHKFMNWDKPILTDSGGYQVFSLAKLNNISDKGVEFRNPRDGSHVFLSPEKVMQIQMDLGSDVAMAFDHCPPHTANENDIEDSLERTHSWLQKCVETHQKSNQALFGIVQGGKYPRLREHSAKFTSSFDLPGIAVGGVSVGEAVEEIHSVINNVPKFLPINKPRYLMGIGSLREISLAVAKGFDIFDCVLPTRLGRHGTAFFNDERWNIRNARFKNDFSPIDKTCKCETCKSYSRAYLHHLVRNDEILGLTLISLHNISHLIRFTNAISAAIKDNCFTIDFAPWKRSSIAHHTW.

Asp-92 (proton acceptor) is an active-site residue. Residues 92 to 96, Asp-146, Gln-188, and Gly-215 each bind substrate; that span reads DSGGY. The RNA binding stretch occupies residues 246-252; that stretch reads GIGSLRE. Residue Asp-265 is the Nucleophile of the active site. The segment at 270–274 is RNA binding; important for wobble base 34 recognition; the sequence is TRLGR. The Zn(2+) site is built by Cys-303, Cys-305, Cys-308, and His-334.

The protein belongs to the queuine tRNA-ribosyltransferase family. As to quaternary structure, homodimer. Within each dimer, one monomer is responsible for RNA recognition and catalysis, while the other monomer binds to the replacement base PreQ1. It depends on Zn(2+) as a cofactor.

It carries out the reaction 7-aminomethyl-7-carbaguanine + guanosine(34) in tRNA = 7-aminomethyl-7-carbaguanosine(34) in tRNA + guanine. The protein operates within tRNA modification; tRNA-queuosine biosynthesis. Its function is as follows. Catalyzes the base-exchange of a guanine (G) residue with the queuine precursor 7-aminomethyl-7-deazaguanine (PreQ1) at position 34 (anticodon wobble position) in tRNAs with GU(N) anticodons (tRNA-Asp, -Asn, -His and -Tyr). Catalysis occurs through a double-displacement mechanism. The nucleophile active site attacks the C1' of nucleotide 34 to detach the guanine base from the RNA, forming a covalent enzyme-RNA intermediate. The proton acceptor active site deprotonates the incoming PreQ1, allowing a nucleophilic attack on the C1' of the ribose to form the product. After dissociation, two additional enzymatic reactions on the tRNA convert PreQ1 to queuine (Q), resulting in the hypermodified nucleoside queuosine (7-(((4,5-cis-dihydroxy-2-cyclopenten-1-yl)amino)methyl)-7-deazaguanosine). This chain is Queuine tRNA-ribosyltransferase, found in Prochlorococcus marinus subsp. pastoris (strain CCMP1986 / NIES-2087 / MED4).